Consider the following 367-residue polypeptide: Putative methylthioribose-1-phosphate isomerase (367 aa).

Substrate contacts are provided by residues 65-67 (RGA), R106, and Q218. The active-site Proton donor is the D259. 269–270 (NK) is a binding site for substrate.

It belongs to the eIF-2B alpha/beta/delta subunits family. MtnA subfamily.

It catalyses the reaction 5-(methylsulfanyl)-alpha-D-ribose 1-phosphate = 5-(methylsulfanyl)-D-ribulose 1-phosphate. Catalyzes the interconversion of methylthioribose-1-phosphate (MTR-1-P) into methylthioribulose-1-phosphate (MTRu-1-P). The protein is Putative methylthioribose-1-phosphate isomerase of Sulfolobus acidocaldarius (strain ATCC 33909 / DSM 639 / JCM 8929 / NBRC 15157 / NCIMB 11770).